Here is a 278-residue protein sequence, read N- to C-terminus: Ankyrin repeat and SOCS box protein 13 (278 aa).

6 ANK repeats span residues 18-47 (VERT…CVNQ), 51-80 (DSIT…QVDA), 84-113 (DGST…KVNP), 116-145 (YTAS…NLEA), 149-178 (HFGT…NVNA), and 181-210 (LHET…NIYA). The 50-residue stretch at 229–278 (AKCFEYYEKTPLTLSQLCRVNLRKATGVRGLEKIAKLNIPPRLIDYLSYN) folds into the SOCS box domain.

Belongs to the ankyrin SOCS box (ASB) family.

Its pathway is protein modification; protein ubiquitination. In terms of biological role, may be a substrate-recognition component of a SCF-like ECS (Elongin-Cullin-SOCS-box protein) E3 ubiquitin-protein ligase complex which mediates the ubiquitination and subsequent proteasomal degradation of target proteins. The chain is Ankyrin repeat and SOCS box protein 13 (ASB13) from Homo sapiens (Human).